The following is a 376-amino-acid chain: Erythronate-4-phosphate dehydrogenase (376 aa).

Substrate-binding residues include Ser-45 and Thr-67. NAD(+) contacts are provided by residues Gln-127–Val-128, Asp-147, and Thr-176. Arg-209 is an active-site residue. An NAD(+)-binding site is contributed by Asp-233. Glu-238 is a catalytic residue. The Proton donor role is filled by His-255. Residue Gly-258 participates in NAD(+) binding. Position 259 (Tyr-259) interacts with substrate.

This sequence belongs to the D-isomer specific 2-hydroxyacid dehydrogenase family. PdxB subfamily. In terms of assembly, homodimer.

The protein resides in the cytoplasm. The enzyme catalyses 4-phospho-D-erythronate + NAD(+) = (R)-3-hydroxy-2-oxo-4-phosphooxybutanoate + NADH + H(+). It participates in cofactor biosynthesis; pyridoxine 5'-phosphate biosynthesis; pyridoxine 5'-phosphate from D-erythrose 4-phosphate: step 2/5. Catalyzes the oxidation of erythronate-4-phosphate to 3-hydroxy-2-oxo-4-phosphonooxybutanoate. In Aliivibrio salmonicida (strain LFI1238) (Vibrio salmonicida (strain LFI1238)), this protein is Erythronate-4-phosphate dehydrogenase.